Reading from the N-terminus, the 776-residue chain is Bifunctional lysine-specific demethylase and histidyl-hydroxylase NO66 (776 aa).

Disordered regions lie at residues 1 to 57 (MGKK…EPKF), 87 to 126 (EQNG…AHKH), and 165 to 288 (ILDE…DDEG). Basic and acidic residues-rich tracts occupy residues 47-57 (HYKEPSKEPKF) and 98-119 (EISP…DGVA). Over residues 166-204 (LDEEVEDEEIDEEEFEDEEEVEDEEGMDEDETEIDESEM) the composition is skewed to acidic residues. Positions 206 to 216 (VDPKDIERCIE) are enriched in basic and acidic residues. Residues 217–288 (FEDVDDEDEM…EMDADSDDEG (72 aa)) show a composition bias toward acidic residues. A JmjC domain is found at 425 to 569 (QLVNPQTFDD…NLMEKVIPEA (145 aa)). Fe cation-binding residues include H468, D470, and H535.

The protein belongs to the ROX family. NO66 subfamily. Fe(2+) serves as cofactor.

The protein resides in the nucleus. The enzyme catalyses N(6),N(6)-dimethyl-L-lysyl(36)-[histone H3] + 2 2-oxoglutarate + 2 O2 = L-lysyl(36)-[histone H3] + 2 formaldehyde + 2 succinate + 2 CO2. Functionally, oxygenase that can act as both a histone lysine demethylase and a ribosomal histidine hydroxylase. Specifically demethylates 'Lys-4' (H3K4me) and 'Lys-36' (H3K36me) of histone H3, thereby playing a central role in histone code. This chain is Bifunctional lysine-specific demethylase and histidyl-hydroxylase NO66 (jmjc-1), found in Caenorhabditis briggsae.